A 660-amino-acid chain; its full sequence is DNA topoisomerase I, plasmid (660 aa).

Residues 1–110 (MKLMIIESPG…LRVTFNEITA (110 aa)) form the Toprim domain. 2 residues coordinate Mg(2+): Glu7 and Asp79. In terms of domain architecture, Topo IA-type catalytic spans 124-550 (DVKRVAAQEA…KVHDQLNMEL (427 aa)). The interval 158 to 163 (SAGRVQ) is interaction with DNA. Tyr287 acts as the O-(5'-phospho-DNA)-tyrosine intermediate in catalysis. C4-type zinc fingers lie at residues 563 to 589 (CQECGKPLRRIPGKNGHFWGCSGYPDC) and 613 to 643 (CVKCGNPLKHLVKKGKGGYDFWGCSGFKEGC).

It belongs to the type IA topoisomerase family. In terms of assembly, monomer. The cofactor is Mg(2+).

The catalysed reaction is ATP-independent breakage of single-stranded DNA, followed by passage and rejoining.. In terms of biological role, releases the supercoiling and torsional tension of DNA, which is introduced during the DNA replication and transcription, by transiently cleaving and rejoining one strand of the DNA duplex. Introduces a single-strand break via transesterification at a target site in duplex DNA. The scissile phosphodiester is attacked by the catalytic tyrosine of the enzyme, resulting in the formation of a DNA-(5'-phosphotyrosyl)-enzyme intermediate and the expulsion of a 3'-OH DNA strand. The free DNA strand then undergoes passage around the unbroken strand, thus removing DNA supercoils. Finally, in the religation step, the DNA 3'-OH attacks the covalent intermediate to expel the active-site tyrosine and restore the DNA phosphodiester backbone. This is DNA topoisomerase I, plasmid from Xylella fastidiosa (strain 9a5c).